The sequence spans 399 residues: Proteasome-activating nucleotidase (399 aa).

The stretch at isoleucine 19–proline 60 forms a coiled coil. ATP-binding positions include glycine 184 to leucine 189 and histidine 323. The docks into pockets in the proteasome alpha-ring to cause gate opening stretch occupies residues isoleucine 397–glycine 399.

The protein belongs to the AAA ATPase family. As to quaternary structure, homohexamer. The hexameric complex has a two-ring architecture resembling a top hat that caps the 20S proteasome core at one or both ends. Upon ATP-binding, the C-terminus of PAN interacts with the alpha-rings of the proteasome core by binding to the intersubunit pockets.

It is found in the cytoplasm. In terms of biological role, ATPase which is responsible for recognizing, binding, unfolding and translocation of substrate proteins into the archaeal 20S proteasome core particle. Is essential for opening the gate of the 20S proteasome via an interaction with its C-terminus, thereby allowing substrate entry and access to the site of proteolysis. Thus, the C-termini of the proteasomal ATPase function like a 'key in a lock' to induce gate opening and therefore regulate proteolysis. Unfolding activity requires energy from ATP hydrolysis, whereas ATP binding alone promotes ATPase-20S proteasome association which triggers gate opening, and supports translocation of unfolded substrates. This Pyrococcus horikoshii (strain ATCC 700860 / DSM 12428 / JCM 9974 / NBRC 100139 / OT-3) protein is Proteasome-activating nucleotidase.